A 276-amino-acid polypeptide reads, in one-letter code: Mitochondrial outer membrane protein porin 6 (276 aa).

The protein belongs to the eukaryotic mitochondrial porin (TC 1.B.8.1) family.

Its subcellular location is the mitochondrion outer membrane. In terms of biological role, forms a channel through the mitochondrial outer membrane that allows diffusion of small hydrophilic molecules. The channel adopts an open conformation at low or zero membrane potential and a closed conformation at potentials above 30-40 mV. The open state has a weak anion selectivity whereas the closed state is cation-selective. This chain is Mitochondrial outer membrane protein porin 6 (VDAC6), found in Oryza sativa subsp. japonica (Rice).